Consider the following 229-residue polypeptide: Urease accessory protein UreF (229 aa).

The protein belongs to the UreF family. As to quaternary structure, ureD, UreF and UreG form a complex that acts as a GTP-hydrolysis-dependent molecular chaperone, activating the urease apoprotein by helping to assemble the nickel containing metallocenter of UreC. The UreE protein probably delivers the nickel.

Its subcellular location is the cytoplasm. Functionally, required for maturation of urease via the functional incorporation of the urease nickel metallocenter. In Staphylococcus aureus (strain MRSA252), this protein is Urease accessory protein UreF.